The following is a 620-amino-acid chain: Membralin (620 aa).

Residues 1–33 (MSEHVEPAAPGPGPNGGGGGPAPARGPRTPNLN) are disordered. Position 2 is an N-acetylserine (serine 2). The span at 22–31 (APARGPRTPN) shows a compositional bias: low complexity. Position 29 is a phosphothreonine (threonine 29). Residues 70-90 (FFVLLKALFVLFVLAYIHIVF) traverse the membrane as a helical segment. An N-linked (GlcNAc...) asparagine glycan is attached at asparagine 189. 3 helical membrane-spanning segments follow: residues 302–322 (TSYL…SMLL), 346–366 (IAFP…MEAI), and 426–446 (YSSL…IYFF). 2 disordered regions span residues 474–517 (TPTA…GPVA) and 568–620 (SPLG…EVGS). 2 stretches are compositionally biased toward low complexity: residues 499-517 (PPAL…GPVA) and 568-593 (SPLG…AASD).

Belongs to the membralin family. As to quaternary structure, interacts with ERLIN2.

It localises to the endoplasmic reticulum membrane. Its function is as follows. May have a role in the ERAD pathway required for clearance of misfolded proteins in the endoplasmic reticulum (ER). Promotes survival of motor neurons, probably by protecting against ER stress. This is Membralin (TMEM259) from Homo sapiens (Human).